The sequence spans 599 residues: Elongation factor 4 (599 aa).

Positions 2-184 constitute a tr-type G domain; sequence KHIRNFSIIA…RLVRDIPPPE (183 aa). GTP is bound by residues 14-19 and 131-134; these read DHGKST and NKID.

The protein belongs to the TRAFAC class translation factor GTPase superfamily. Classic translation factor GTPase family. LepA subfamily.

It localises to the cell inner membrane. The catalysed reaction is GTP + H2O = GDP + phosphate + H(+). In terms of biological role, required for accurate and efficient protein synthesis under certain stress conditions. May act as a fidelity factor of the translation reaction, by catalyzing a one-codon backward translocation of tRNAs on improperly translocated ribosomes. Back-translocation proceeds from a post-translocation (POST) complex to a pre-translocation (PRE) complex, thus giving elongation factor G a second chance to translocate the tRNAs correctly. Binds to ribosomes in a GTP-dependent manner. This Pectobacterium carotovorum subsp. carotovorum (strain PC1) protein is Elongation factor 4.